The primary structure comprises 493 residues: UDP-glucose 6-dehydrogenase (493 aa).

NAD(+)-binding positions include 11–16 (GAGYVG), D36, R41, and 89–93 (VNTPT). The tract at residues 88–110 (SVNTPTKTYGMGKGRAADLKYIE) is disordered. At K107 the chain carries N6-acetyllysine. Positions 129–135 (KSTVPVR) are allosteric switch region. Residue 130-132 (STV) coordinates NAD(+). E161 functions as the Proton donor/acceptor in the catalytic mechanism. Substrate contacts are provided by residues 161–165 (EFLAE), 220–224 (KLAAN), R260, and 267–273 (KASVGFG). NAD(+) is bound at residue E165. Residue K220 is the Proton donor/acceptor of the active site. C276 functions as the Nucleophile in the catalytic mechanism. NAD(+) is bound at residue 276-279 (CFQK). The tract at residues 321-325 (SLFNT) is important for formation of active hexamer structure. Substrate is bound at residue 338-339 (FK). Residue R346 participates in NAD(+) binding. R442 lines the substrate pocket. The interval 466–493 (VSSKRIPYTPGEIPKFSLQDPPNKKPKV) is disordered. A Phosphothreonine modification is found at T474.

The protein belongs to the UDP-glucose/GDP-mannose dehydrogenase family. Homohexamer.

The enzyme catalyses UDP-alpha-D-glucose + 2 NAD(+) + H2O = UDP-alpha-D-glucuronate + 2 NADH + 3 H(+). The protein operates within nucleotide-sugar biosynthesis; UDP-alpha-D-glucuronate biosynthesis; UDP-alpha-D-glucuronate from UDP-alpha-D-glucose: step 1/1. Its activity is regulated as follows. UDP-alpha-D-xylose (UDX) acts as a feedback inhibitor. It binds at the same site as the substrate, but functions as allosteric inhibitor by triggering a conformation change that disrupts the active hexameric ring structure and gives rise to an inactive, horseshoe-shaped hexamer. In terms of biological role, catalyzes the formation of UDP-alpha-D-glucuronate, a constituent of complex glycosaminoglycans. Required for the biosynthesis of chondroitin sulfate and heparan sulfate. Required for embryonic development via its role in the biosynthesis of glycosaminoglycans. Required for proper brain and neuronal development. The sequence is that of UDP-glucose 6-dehydrogenase (Ugdh) from Mus musculus (Mouse).